A 346-amino-acid polypeptide reads, in one-letter code: Small ribosomal subunit biogenesis GTPase RsgA 1 (346 aa).

A CP-type G domain is found at 93-248 (AEQLIAANFD…VIDTPGMREF (156 aa)). Residues 138-141 (TKAD) and 190-198 (GSSGVGKSS) each bind GTP. 4 residues coordinate Zn(2+): Cys-271, Cys-276, His-278, and Cys-284.

The protein belongs to the TRAFAC class YlqF/YawG GTPase family. RsgA subfamily. Monomer. Associates with 30S ribosomal subunit, binds 16S rRNA. Zn(2+) is required as a cofactor.

It localises to the cytoplasm. In terms of biological role, one of several proteins that assist in the late maturation steps of the functional core of the 30S ribosomal subunit. Helps release RbfA from mature subunits. May play a role in the assembly of ribosomal proteins into the subunit. Circularly permuted GTPase that catalyzes slow GTP hydrolysis, GTPase activity is stimulated by the 30S ribosomal subunit. The sequence is that of Small ribosomal subunit biogenesis GTPase RsgA 1 from Listeria monocytogenes serovar 1/2a (strain ATCC BAA-679 / EGD-e).